The chain runs to 90 residues: Protein LURE 1.2 (90 aa).

Positions 1-19 (MKLPIIFLTLLIFVSSCTS) are cleaved as a signal peptide. The N-linked (GlcNAc...) asparagine glycan is linked to N23. 3 disulfides stabilise this stretch: C58–C75, C61–C82, and C65–C84. The PRK6 binding stretch occupies residues 67–87 (RRGKYIRTCSFERKLCRCSIS).

It belongs to the DEFL family. In terms of assembly, interacts with MDIS1, MIK1, MIK2 and TDR/PXY, but not with MDIS2. Binds to PRK6 LRRs. In terms of tissue distribution, expressed in the pistil. Detected exclusively in the synergid cells.

The protein localises to the secreted. Its function is as follows. Pollen tube attractants guiding pollen tubes to the ovular micropyle. Attracts specifically pollen tubes from A.thaliana, but not those from A.lyrata. Triggers endocytosis of MDIS1 in the pollen tube tip. This chain is Protein LURE 1.2, found in Arabidopsis thaliana (Mouse-ear cress).